The following is a 608-amino-acid chain: Extracellular metalloproteinase 5 (608 aa).

Residues Met1–Ala20 form the signal peptide. Residues His21 to His244 constitute a propeptide that is removed on maturation. An N-linked (GlcNAc...) asparagine glycan is attached at Asn285. His427 contacts Zn(2+). Residue Glu428 is part of the active site. His431 serves as a coordination point for Zn(2+). N-linked (GlcNAc...) asparagine glycosylation occurs at Asn591.

Belongs to the peptidase M36 family. Zn(2+) is required as a cofactor.

The protein resides in the secreted. Functionally, secreted metalloproteinase probably acting as a virulence factor. This is Extracellular metalloproteinase 5 (MEP5) from Trichophyton tonsurans (Scalp ringworm fungus).